The following is a 190-amino-acid chain: Zinc finger C2H2 protein ECU03_0790 (190 aa).

C2H2-type zinc fingers lie at residues 4 to 27 (RCCF…LNTH), 33 to 55 (YKCD…KKKH), 85 to 108 (YKCG…ESHH), and 119 to 142 (HVCE…RSVH).

In Encephalitozoon cuniculi (strain GB-M1) (Microsporidian parasite), this protein is Zinc finger C2H2 protein ECU03_0790.